A 593-amino-acid polypeptide reads, in one-letter code: Probable tripeptidyl-peptidase SED3 (593 aa).

The N-terminal stretch at 1–18 (MLLRWHSVIPLFLAMTVA) is a signal peptide. Positions 19–198 (FPNTYRTVVE…NLQAIYLSTN (180 aa)) are cleaved as a propeptide — removed in mature form. 3 N-linked (GlcNAc...) asparagine glycosylation sites follow: N204, N261, and N275. Residues 206 to 592 (TITPRCLREL…RILAKIVQHM (387 aa)) enclose the Peptidase S53 domain. Residues E282 and D286 each act as charge relay system in the active site. N295 carries an N-linked (GlcNAc...) asparagine glycan. The active-site Charge relay system is S496. Ca(2+)-binding residues include D538 and I539. 2 N-linked (GlcNAc...) asparagine glycosylation sites follow: N554 and N566. 2 residues coordinate Ca(2+): G570 and D572.

Requires Ca(2+) as cofactor.

It is found in the secreted. Its subcellular location is the extracellular space. It catalyses the reaction Release of an N-terminal tripeptide from a polypeptide.. In terms of biological role, secreted tripeptidyl-peptidase which degrades proteins at acidic pHs and is involved in virulence. The chain is Probable tripeptidyl-peptidase SED3 (SED3) from Arthroderma benhamiae (strain ATCC MYA-4681 / CBS 112371) (Trichophyton mentagrophytes).